Reading from the N-terminus, the 326-residue chain is Putative ribose-phosphate pyrophosphokinase 2 (326 aa).

ATP contacts are provided by residues 43 to 45 and 102 to 103; these read DGE and RQ. A Mg(2+)-binding site is contributed by His-136. D-ribose 5-phosphate is bound by residues Asp-225 and 229–233; that span reads NTGKT.

Homohexamer. Mg(2+) is required as a cofactor.

It localises to the cytoplasm. The catalysed reaction is D-ribose 5-phosphate + ATP = 5-phospho-alpha-D-ribose 1-diphosphate + AMP + H(+). The protein operates within metabolic intermediate biosynthesis; 5-phospho-alpha-D-ribose 1-diphosphate biosynthesis; 5-phospho-alpha-D-ribose 1-diphosphate from D-ribose 5-phosphate (route I): step 1/1. In terms of biological role, involved in the biosynthesis of the central metabolite phospho-alpha-D-ribosyl-1-pyrophosphate (PRPP) via the transfer of pyrophosphoryl group from ATP to 1-hydroxyl of ribose-5-phosphate (Rib-5-P). The chain is Putative ribose-phosphate pyrophosphokinase 2 from Streptococcus pyogenes serotype M6 (strain ATCC BAA-946 / MGAS10394).